The chain runs to 1704 residues: Methyltransferase/helicase/RNA-directed RNA polymerase (1704 aa).

Residues 52-295 (KGGTLPPTQH…HDFHTWLAYL (244 aa)) form the Alphavirus-like MT domain. Positions 575-737 (LNTDVKQLKI…VVKQCRRRTF (163 aa)) constitute a (+)RNA virus helicase ATP-binding domain. The (+)RNA virus helicase C-terminal domain maps to 738–880 (NQTKRCPADV…PAPLEITTVK (143 aa)). A compositionally biased stretch (basic and acidic residues) spans 1475 to 1501 (TEDLNSRKPPSQDRQSRSSECLDRSGE). Disordered regions lie at residues 1475-1518 (TEDL…PSFS), 1621-1649 (TKLSSDASKGYSRTKGCSQSTSFPAPSAD), and 1678-1704 (SSAASADLKRIRSTSDSVPDVKISKSA). A compositionally biased stretch (low complexity) spans 1505–1518 (SSLTAPTAPSPSFS). The span at 1635–1644 (KGCSQSTSFP) shows a compositional bias: polar residues.

It belongs to the ssRNA positive-strand viruses RNA-directed RNA polymerase family.

It localises to the host cytoplasm. It carries out the reaction RNA(n) + a ribonucleoside 5'-triphosphate = RNA(n+1) + diphosphate. The catalysed reaction is ATP + H2O = ADP + phosphate + H(+). Functionally, RNA-dependent RNA polymerase replicates the viral genome composed of 2 RNA segments, RNA1 and RNA2. The chain is Methyltransferase/helicase/RNA-directed RNA polymerase from Helicoverpa armigera (Cotton bollworm).